Here is a 254-residue protein sequence, read N- to C-terminus: Imidazole glycerol phosphate synthase subunit HisF (254 aa).

Catalysis depends on residues aspartate 11 and aspartate 130.

This sequence belongs to the HisA/HisF family. In terms of assembly, heterodimer of HisH and HisF.

The protein resides in the cytoplasm. The catalysed reaction is 5-[(5-phospho-1-deoxy-D-ribulos-1-ylimino)methylamino]-1-(5-phospho-beta-D-ribosyl)imidazole-4-carboxamide + L-glutamine = D-erythro-1-(imidazol-4-yl)glycerol 3-phosphate + 5-amino-1-(5-phospho-beta-D-ribosyl)imidazole-4-carboxamide + L-glutamate + H(+). It participates in amino-acid biosynthesis; L-histidine biosynthesis; L-histidine from 5-phospho-alpha-D-ribose 1-diphosphate: step 5/9. Its function is as follows. IGPS catalyzes the conversion of PRFAR and glutamine to IGP, AICAR and glutamate. The HisF subunit catalyzes the cyclization activity that produces IGP and AICAR from PRFAR using the ammonia provided by the HisH subunit. The sequence is that of Imidazole glycerol phosphate synthase subunit HisF from Solibacter usitatus (strain Ellin6076).